Here is a 352-residue protein sequence, read N- to C-terminus: Uroporphyrinogen decarboxylase (352 aa).

Substrate-binding positions include Arg29 to Arg33, Phe48, Asp78, Tyr154, Ser209, and His322.

It belongs to the uroporphyrinogen decarboxylase family. As to quaternary structure, homodimer.

It localises to the cytoplasm. It catalyses the reaction uroporphyrinogen III + 4 H(+) = coproporphyrinogen III + 4 CO2. It functions in the pathway porphyrin-containing compound metabolism; protoporphyrin-IX biosynthesis; coproporphyrinogen-III from 5-aminolevulinate: step 4/4. Its function is as follows. Catalyzes the decarboxylation of four acetate groups of uroporphyrinogen-III to yield coproporphyrinogen-III. The sequence is that of Uroporphyrinogen decarboxylase from Bacillus pumilus (strain SAFR-032).